A 451-amino-acid polypeptide reads, in one-letter code: Probable metal transport system membrane protein CT_069 (451 aa).

The next 8 helical transmembrane spans lie at 14 to 34 (SFLA…ILLV), 38 to 58 (PLLS…GALL), 70 to 90 (WVII…ISFL), 100 to 120 (SALC…VSYV), 145 to 165 (TEAK…WWWY), 192 to 212 (VLVF…ILLI), 233 to 253 (ILIL…YFSV), and 269 to 289 (ILPT…LCLI). A disordered region spans residues 432–451 (PDYDPHQREIPKRTRKSDGC). The segment covering 434–451 (YDPHQREIPKRTRKSDGC) has biased composition (basic and acidic residues).

It belongs to the ABC-3 integral membrane protein family.

The protein resides in the cell inner membrane. In terms of biological role, part of an ATP-driven transport system CT_067/CT_068/CT_069/CT_070 for a metal. The sequence is that of Probable metal transport system membrane protein CT_069 from Chlamydia trachomatis serovar D (strain ATCC VR-885 / DSM 19411 / UW-3/Cx).